We begin with the raw amino-acid sequence, 426 residues long: Coiled-coil domain-containing protein 86 (426 aa).

The tract at residues 1-426 (MDTPLRRSRR…QPPQRPVAKV (426 aa)) is disordered. At S18 the chain carries Phosphoserine. Basic and acidic residues predominate over residues 33-49 (ALVDFKSNSEETGELKS). The segment covering 55 to 145 (LSLPSPGPQP…SLPSPGPQPE (91 aa)) has biased composition (pro residues). S59 is subject to Phosphoserine. T66 is modified (phosphothreonine). Phosphoserine is present on residues S67, S70, S161, S172, S183, S191, S194, S225, S252, S253, and S283. Residues 241-255 (QPAQELTVQAPSSPE) are compositionally biased toward polar residues. Residues 304 to 320 (GKPKSGRVWKDRSKKRF) show a composition bias toward basic residues. Residues 339 to 383 (ERQERKLAKDFARHLEEEKQRRRQEKKERRAENLRRRLENERKAE) are compositionally biased toward basic and acidic residues. Positions 346–389 (AKDFARHLEEEKQRRRQEKKERRAENLRRRLENERKAEIVQVIR) form a coiled coil. The segment covering 392–402 (AKLKKAKKKQL) has biased composition (basic residues). R408 is subject to Citrulline.

Citrullinated by PADI4. Highly expressed in testis. Also expressed in heart, liver, kidney.

The protein resides in the nucleus. It is found in the chromosome. Its subcellular location is the nucleolus. Required for proper chromosome segregation during mitosis and error-free mitotic progression. This Mus musculus (Mouse) protein is Coiled-coil domain-containing protein 86.